The following is a 197-amino-acid chain: Glycerol-3-phosphate acyltransferase (197 aa).

Helical transmembrane passes span 7 to 27 (TLLP…LILT), 55 to 75 (GLAA…VLIV), 78 to 98 (VWPG…CFPV), 116 to 136 (LALA…VLFL), and 157 to 177 (VLGY…VLYL).

The protein belongs to the PlsY family. Probably interacts with PlsX.

The protein resides in the cell inner membrane. It catalyses the reaction an acyl phosphate + sn-glycerol 3-phosphate = a 1-acyl-sn-glycero-3-phosphate + phosphate. It participates in lipid metabolism; phospholipid metabolism. Catalyzes the transfer of an acyl group from acyl-phosphate (acyl-PO(4)) to glycerol-3-phosphate (G3P) to form lysophosphatidic acid (LPA). This enzyme utilizes acyl-phosphate as fatty acyl donor, but not acyl-CoA or acyl-ACP. The protein is Glycerol-3-phosphate acyltransferase of Novosphingobium aromaticivorans (strain ATCC 700278 / DSM 12444 / CCUG 56034 / CIP 105152 / NBRC 16084 / F199).